Consider the following 314-residue polypeptide: DNA-directed RNA polymerase subunit alpha (314 aa).

The segment at 1–227 (MTTFEIECIE…ELLFPLKEIN (227 aa)) is alpha N-terminal domain (alpha-NTD). An alpha C-terminal domain (alpha-CTD) region spans residues 237 to 314 (IEDSKINQIL…LPKEKTSKSN (78 aa)).

The protein belongs to the RNA polymerase alpha chain family. In plastids the minimal PEP RNA polymerase catalytic core is composed of four subunits: alpha, beta, beta', and beta''. When a (nuclear-encoded) sigma factor is associated with the core the holoenzyme is formed, which can initiate transcription.

The protein localises to the plastid. It localises to the chloroplast. The catalysed reaction is RNA(n) + a ribonucleoside 5'-triphosphate = RNA(n+1) + diphosphate. Functionally, DNA-dependent RNA polymerase catalyzes the transcription of DNA into RNA using the four ribonucleoside triphosphates as substrates. This is DNA-directed RNA polymerase subunit alpha from Pyrenomonas salina.